Consider the following 320-residue polypeptide: Aspartate carbamoyltransferase catalytic subunit (320 aa).

The carbamoyl phosphate site is built by Arg-70 and Thr-71. Residue Lys-98 coordinates L-aspartate. Residues Arg-120, His-149, and Gln-152 each contribute to the carbamoyl phosphate site. Residues Arg-182 and Arg-237 each coordinate L-aspartate. Positions 278 and 279 each coordinate carbamoyl phosphate.

This sequence belongs to the aspartate/ornithine carbamoyltransferase superfamily. ATCase family. Heterododecamer (2C3:3R2) of six catalytic PyrB chains organized as two trimers (C3), and six regulatory PyrI chains organized as three dimers (R2).

The catalysed reaction is carbamoyl phosphate + L-aspartate = N-carbamoyl-L-aspartate + phosphate + H(+). It participates in pyrimidine metabolism; UMP biosynthesis via de novo pathway; (S)-dihydroorotate from bicarbonate: step 2/3. Functionally, catalyzes the condensation of carbamoyl phosphate and aspartate to form carbamoyl aspartate and inorganic phosphate, the committed step in the de novo pyrimidine nucleotide biosynthesis pathway. This chain is Aspartate carbamoyltransferase catalytic subunit, found in Ruthia magnifica subsp. Calyptogena magnifica.